Consider the following 362-residue polypeptide: 3-isopropylmalate dehydrogenase (362 aa).

Position 77-88 (77-88 (GPKWGTGAVRPE)) interacts with NAD(+). Substrate is bound by residues Arg-95, Arg-105, Arg-134, and Asp-223. Residues Asp-223, Asp-248, and Asp-252 each contribute to the Mg(2+) site. Position 287-298 (287-298 (GSAPDLPKGKVN)) interacts with NAD(+).

It belongs to the isocitrate and isopropylmalate dehydrogenases family. In terms of assembly, homodimer. Mg(2+) is required as a cofactor. It depends on Mn(2+) as a cofactor.

It is found in the cytoplasm. It carries out the reaction (2R,3S)-3-isopropylmalate + NAD(+) = 4-methyl-2-oxopentanoate + CO2 + NADH. The protein operates within amino-acid biosynthesis; L-leucine biosynthesis; L-leucine from 3-methyl-2-oxobutanoate: step 3/4. Catalyzes the oxidation of 3-carboxy-2-hydroxy-4-methylpentanoate (3-isopropylmalate) to 3-carboxy-4-methyl-2-oxopentanoate. The product decarboxylates to 4-methyl-2 oxopentanoate. This Zygosaccharomyces bailii protein is 3-isopropylmalate dehydrogenase (LEU2).